Reading from the N-terminus, the 382-residue chain is Homoserine O-acetyltransferase (382 aa).

The AB hydrolase-1 domain occupies 52-356 (NVVMVLHALT…TYGHDGFLVE (305 aa)). Ser-157 acts as the Nucleophile in catalysis. A substrate-binding site is contributed by Arg-227. Catalysis depends on residues Asp-320 and His-350. A substrate-binding site is contributed by Asp-351.

It belongs to the AB hydrolase superfamily. MetX family. In terms of assembly, homodimer.

It localises to the cytoplasm. The enzyme catalyses L-homoserine + acetyl-CoA = O-acetyl-L-homoserine + CoA. It functions in the pathway amino-acid biosynthesis; L-methionine biosynthesis via de novo pathway; O-acetyl-L-homoserine from L-homoserine: step 1/1. Functionally, transfers an acetyl group from acetyl-CoA to L-homoserine, forming acetyl-L-homoserine. The polypeptide is Homoserine O-acetyltransferase (Mycobacterium leprae (strain TN)).